The following is a 438-amino-acid chain: MSAPQKPHLNIVIIGHVDHGKSTMTGHILYRLGYFDEKTVKMIEEESKKMGKESFKFAWLLDRMKEERERGVTISLSYMKFETKKYFFTIIDAPGHRDFVKNMITGASQADAAILVVSARKGEFEAGMSAEGQTREHAILARTMGINQLIVAINKMDATEPPYSEKRYNEIKEILGKFLKGLGYDVSKIPFIPISAWTGENLIERSPNMPWYNGPTLVEALDTLEVPPKPINKPLRIPIQDVYNISGIGVVPVGRVETGVLKVGDKLVFMPAGLVAEVKTIETHHTKIEKAEPGDNIGFNVKGVEKKDIKRGDVAGSLDVPPTVADEFTARIMVMWHPTAIAVGYTPVIHVHTASVACRITEIIAKIDPRTGKEIEKNPHFLKQGDIAIVKFKPIKPLVVEKYSDFQGLGRFAMRDMGKTIGIGQVLEIKPAQVNIKK.

Positions 6 to 229 (KPHLNIVIIG…ALDTLEVPPK (224 aa)) constitute a tr-type G domain. A G1 region spans residues 15–22 (GHVDHGKS). 15–22 (GHVDHGKS) lines the GTP pocket. Serine 22 lines the Mg(2+) pocket. The interval 71-75 (GVTIS) is G2. A G3 region spans residues 92-95 (DAPG). Residues 92-96 (DAPGH) and 154-157 (NKMD) each bind GTP. Positions 154–157 (NKMD) are G4. Positions 195–197 (SAW) are G5.

This sequence belongs to the TRAFAC class translation factor GTPase superfamily. Classic translation factor GTPase family. EF-Tu/EF-1A subfamily.

The protein resides in the cytoplasm. The enzyme catalyses GTP + H2O = GDP + phosphate + H(+). GTP hydrolase that promotes the GTP-dependent binding of aminoacyl-tRNA to the A-site of ribosomes during protein biosynthesis. In Desulfurococcus mucosus (Desulfurococcus mobilis), this protein is Elongation factor 1-alpha.